Reading from the N-terminus, the 469-residue chain is Nuclear hormone receptor family member nhr-154 (469 aa).

Residues 80–159 constitute a DNA-binding region (nuclear receptor); sequence PSKCLVCRNP…VGMNPMAIQA (80 aa). NR C4-type zinc fingers lie at residues 83 to 103 and 119 to 142; these read CLVC…CNGC and CAKQ…CRAC. One can recognise an NR LBD domain in the interval 230–459; that stretch reads LDSKPVLVVT…KMGTTFRKCI (230 aa).

Belongs to the nuclear hormone receptor family.

It localises to the nucleus. Orphan nuclear receptor. The polypeptide is Nuclear hormone receptor family member nhr-154 (nhr-154) (Caenorhabditis elegans).